The chain runs to 390 residues: Trehalose-phosphate phosphatase (390 aa).

The Nucleophile role is filled by D150. 3 residues coordinate Mg(2+): D150, D152, and D333. 150-152 contacts substrate; the sequence is DFD.

Belongs to the trehalose phosphatase family. The cofactor is Mg(2+).

The enzyme catalyses alpha,alpha-trehalose 6-phosphate + H2O = alpha,alpha-trehalose + phosphate. It functions in the pathway glycan biosynthesis; trehalose biosynthesis. Functionally, removes the phosphate from trehalose 6-phosphate to produce free trehalose. This is Trehalose-phosphate phosphatase (otsB) from Mycobacterium ulcerans (strain Agy99).